Consider the following 38-residue polypeptide: Augerpeptide hhe53 (38 aa).

Contains 2 disulfide bonds. In terms of tissue distribution, expressed by the venom duct.

Its subcellular location is the secreted. The chain is Augerpeptide hhe53 from Hastula hectica (Sea snail).